Here is a 289-residue protein sequence, read N- to C-terminus: Iodotyrosine deiodinase 1 (289 aa).

The chain crosses the membrane as a helical span at residues 1–21 (MYFLTPILVAILCILVVWIFK). The segment covering 29–58 (KKKGEPRTRAEARPWVDEDLKDSSDLHQAE) has biased composition (basic and acidic residues). Residues 29-69 (KKKGEPRTRAEARPWVDEDLKDSSDLHQAEEDADEWQESEE) are disordered. A compositionally biased stretch (acidic residues) spans 59–69 (EDADEWQESEE). Residues 100–104 (RRSVR), Ser128, and 128–129 (SG) contribute to the FMN site. 3-iodo-L-tyrosine contacts are provided by Ala130, Glu157, Tyr161, and Lys182. FMN-binding positions include 237-239 (TTT) and Arg279.

It belongs to the nitroreductase family. As to quaternary structure, homodimer. The cofactor is FMN. Expressed at a high level in thyroid gland (at protein level). Expressed at a high level in thyroid gland and at lower level in kidney and trachea.

Its subcellular location is the cell membrane. The protein resides in the cytoplasmic vesicle membrane. The enzyme catalyses 2 iodide + L-tyrosine + 2 NADP(+) = 3,5-diiodo-L-tyrosine + 2 NADPH + H(+). It carries out the reaction iodide + L-tyrosine + NADP(+) = 3-iodo-L-tyrosine + NADPH. The catalysed reaction is 3-iodo-L-tyrosine + iodide + NADP(+) = 3,5-diiodo-L-tyrosine + NADPH + H(+). It catalyses the reaction L-tyrosine + chloride + NADP(+) = 3-chloro-L-tyrosine + NADPH. The enzyme catalyses bromide + L-tyrosine + NADP(+) = 3-bromo-L-tyrosine + NADPH. Catalyzes the dehalogenation of halotyrosines such as 3-bromo-L-tyrosine, 3-chloro-L-tyrosine, 3-iodo-L-tyrosine and 3,5-diiodo-L-tyrosine. During thyroid hormone biosynthesis, facilitates iodide salvage by catalysing the oxidative NADPH-dependent deiodination of the halogenated by-products of thyroid hormone production, monoiodotyrosine (L-MIT) and diiodotyrosine (L-DIT). The scavanged iodide can then reenter the hormone-producing pathways. Acts more efficiently on 3-iodo-L-tyrosine than 3,5-diiodo-L-tyrosine. This chain is Iodotyrosine deiodinase 1, found in Homo sapiens (Human).